Consider the following 250-residue polypeptide: 5-oxoprolinase subunit A (250 aa).

It belongs to the LamB/PxpA family. Forms a complex composed of PxpA, PxpB and PxpC.

The catalysed reaction is 5-oxo-L-proline + ATP + 2 H2O = L-glutamate + ADP + phosphate + H(+). Functionally, catalyzes the cleavage of 5-oxoproline to form L-glutamate coupled to the hydrolysis of ATP to ADP and inorganic phosphate. The protein is 5-oxoprolinase subunit A of Thermus thermophilus (strain ATCC BAA-163 / DSM 7039 / HB27).